Reading from the N-terminus, the 927-residue chain is F-box only protein 11 (927 aa).

The tract at residues 1–132 is disordered; that stretch reads MNSVRAANRR…STSTTENFGH (132 aa). Residues 7–16 show a composition bias toward basic residues; sequence ANRRPRRVSR. Positions 17–27 are enriched in low complexity; that stretch reads PRPVQQQQQQP. A compositionally biased stretch (pro residues) spans 28 to 68; that stretch reads PQQPPPQPPQQQPPQQQPPPPPQQQQQQQPPPPPPPPPPLP. Residues 114-129 show a composition bias toward polar residues; that stretch reads PTKNSMEGASTSTTEN. The F-box domain maps to 153–199; it reads QYLQEKLPDEVVLKIFSYLLEQDLCRAACVCKRFSELANDPILWKRL. PbH1 repeat units lie at residues 395–417, 418–440, 441–463, 464–486, 487–509, 510–532, 533–555, 556–578, 579–601, 602–624, 625–647, 648–670, 671–693, 694–716, 717–739, 740–762, 763–785, 786–808, and 809–830; these read GACPTIKHCNISDCENVGLYITD, HAQGIYEDNEISNNALAGIWVKN, HGNPIIRRNHIHHGRDVGVFTFD, HGMGYFESCNIHRNRIAGFEVKA, YANPTVVRCEIHHGQTGGIYVHE, KGRGQFIENKIYANNFAGVWITS, NSDPTIRGNSIFNGNQGGVYIFG, DGRGLIEGNDIYGNALAGIQIRT, NSCPIVRHNKIHDGQHGGIYVHE, KGQGVIEENEVYSNTLAGVWVTT, GSTPVLRRNRIHSGKQVGVYFYD, NGHGVLEDNDIYNHMYSGVQIRT, GSNPKIRRNKIWGGQNGGILVYN, SGLGCIEDNEIFDNAMAGVWIKT, DSNPTLRRNKIHDGRDGGICIFN, GGRGLLEENDIFRNAQAGVLIST, NSHPILRKNRIFDGFAAGIEITN, HATATLEGNQIFNNRFGGLFLAS, and GVNVTMKDNKIMNNQDAIEKAV. A UBR-type zinc finger spans residues 833 to 904; that stretch reads GQCLYKISSY…LSNPCTLAGE (72 aa).

As to quaternary structure, component of the SCF(FBXO11) complex consisting of CUL1, RBX1, SKP1 and FBXO11. Interacts with CIITA. As to expression, isoform 5 is expressed in keratinocytes, fibroblasts and melanocytes.

It localises to the nucleus. The protein localises to the chromosome. It functions in the pathway protein modification; protein ubiquitination. In terms of biological role, substrate recognition component of a SCF (SKP1-CUL1-F-box protein) E3 ubiquitin-protein ligase complex which mediates the ubiquitination and subsequent proteasomal degradation of target proteins, such as DTL/CDT2, BCL6, SNAI1 and PRDM1/BLIMP1. The SCF(FBXO11) complex mediates ubiquitination and degradation of BCL6, thereby playing a role in the germinal center B-cells terminal differentiation toward memory B-cells and plasma cells. The SCF(FBXO11) complex also mediates ubiquitination and degradation of DTL, an important step for the regulation of TGF-beta signaling, cell migration and the timing of the cell-cycle progression and exit. The SCF(FBXO11) complex also catalyzes ubiquitination and degradation of GSK3B-phosphorylated SNAI1. Binds to and neddylates phosphorylated p53/TP53, inhibiting its transcriptional activity. Plays a role in the regulatiom of erythropoiesis but not myelopoiesis or megakaryopoiesis. Mechanistically, activates erythroid genes by mediating the degradation of BAHD1, a heterochromatin-associated protein that recruits corepressors to H3K27me3 marks. Participates in macrophage cell death and inflammation in response to bacterial toxins by regulating the expression of complement 5a receptor 1/C5AR1 and IL-1beta. Acts as a critical regulator to determine the level of MHC-II by mediating the recognition of degron at the P/S/T domain of CIITA leading to its ubiquitination and subsequent degradation via the proteasome. Participates in the antiviral repsonse by initiating the activation of TBK1-IRF3-IFN-I axis. Mediates the 'Lys-63'-linked ubiquitination of TRAF3 to strengthen the interaction between TRAF3 and TBK1. This chain is F-box only protein 11, found in Homo sapiens (Human).